The chain runs to 517 residues: Succinyl-CoA:3-ketoacid coenzyme A transferase 2, mitochondrial (517 aa).

The N-terminal 39 residues, 1 to 39 (MAALRLLASVLGRGVPAGGSGLALSQGCARCFATSPRLR), are a transit peptide targeting the mitochondrion. The 5-glutamyl coenzyme A thioester intermediate role is filled by glutamate 341.

It belongs to the 3-oxoacid CoA-transferase family. Homodimer. As to expression, testis specific.

It is found in the mitochondrion. The catalysed reaction is a 3-oxo acid + succinyl-CoA = a 3-oxoacyl-CoA + succinate. It functions in the pathway ketone metabolism; succinyl-CoA degradation; acetoacetyl-CoA from succinyl-CoA: step 1/1. Key enzyme for ketone body catabolism. Transfers the CoA moiety from succinate to acetoacetate. Formation of the enzyme-CoA intermediate proceeds via an unstable anhydride species formed between the carboxylate groups of the enzyme and substrate. The protein is Succinyl-CoA:3-ketoacid coenzyme A transferase 2, mitochondrial (OXCT2) of Homo sapiens (Human).